A 160-amino-acid chain; its full sequence is Allophycocyanin alpha chain (160 aa).

The residue at position 70 (Asn70) is an N4-methylasparagine. Cys80 lines the (2R,3E)-phycocyanobilin pocket.

The protein belongs to the phycobiliprotein family. In terms of assembly, component of the phycobilisome. Heterodimer of an alpha and a beta chain. Post-translationally, contains one covalently linked phycocyanobilin chromophore.

The protein localises to the cellular thylakoid membrane. Functionally, light-harvesting photosynthetic bile pigment-protein from the phycobiliprotein complex. Allophycocyanin has a maximum absorption at approximately 650 nanometers. In Mastigocladus laminosus (Fischerella sp.), this protein is Allophycocyanin alpha chain (apcA).